The primary structure comprises 360 residues: F420-dependent hydroxymycolic acid dehydrogenase (360 aa).

The segment at residues 1–40 (MTGISRRTFGLAAGFGAIGAGGLGGGCSTRSGPTPTPEPA) is a signal peptide (tat-type signal). Asp-77 contacts coenzyme F420-(gamma-Glu)n. Catalysis depends on His-78, which acts as the Proton donor. Coenzyme F420-(gamma-Glu)n is bound at residue 145 to 146 (TG). Residue Glu-147 is the Proton acceptor of the active site. Coenzyme F420-(gamma-Glu)n contacts are provided by residues Asn-150 and 213 to 214 (SG).

Belongs to the F420-dependent hydroxymycolic acid dehydrogenase family. As to quaternary structure, homodimer. Post-translationally, is exported by the Tat system. The position of the signal peptide cleavage has not been experimentally proven. In terms of processing, may be lipidated.

It is found in the cell envelope. The protein operates within lipid metabolism; mycolic acid biosynthesis. Its activity is regulated as follows. Is inhibited by the anti-tuberculous drug PA-824, a bicyclic 4-nitroimidazole class compound. Therefore, this is consistent with the finding that PA-824 inhibits the formation of K-MAs and causes an accumulation of hydroxymycolic acids (H-MAs) in M.tuberculosis. Functionally, catalyzes the coenzyme F420-dependent oxidation of hydroxymycolic acids (H-MAs) to ketomycolic acids (K-MAs), a lipid class making up the mycobacterial pseudo-outer membrane and over one-third of the dry weight of M.tuberculosis. Does not exhibit F420-dependent glucose-6-phosphate dehydrogenase (FGD) activity. The polypeptide is F420-dependent hydroxymycolic acid dehydrogenase (Mycobacterium tuberculosis (strain ATCC 25618 / H37Rv)).